Consider the following 356-residue polypeptide: Histidinol-phosphate aminotransferase (356 aa).

Position 214 is an N6-(pyridoxal phosphate)lysine (Lys-214).

It belongs to the class-II pyridoxal-phosphate-dependent aminotransferase family. Histidinol-phosphate aminotransferase subfamily. As to quaternary structure, homodimer. Pyridoxal 5'-phosphate is required as a cofactor.

The catalysed reaction is L-histidinol phosphate + 2-oxoglutarate = 3-(imidazol-4-yl)-2-oxopropyl phosphate + L-glutamate. The protein operates within amino-acid biosynthesis; L-histidine biosynthesis; L-histidine from 5-phospho-alpha-D-ribose 1-diphosphate: step 7/9. The sequence is that of Histidinol-phosphate aminotransferase from Escherichia coli O81 (strain ED1a).